A 210-amino-acid chain; its full sequence is 7-carboxy-7-deazaguanine synthase (210 aa).

Substrate-binding positions include 12–14 and Arg27; that span reads LQG. Residues 18 to 210 enclose the Radical SAM core domain; that stretch reads QAGRAAVFCR…LQTHKYIGIP (193 aa). [4Fe-4S] cluster-binding residues include Cys31, Cys46, and Cys49. Residue Thr51 participates in Mg(2+) binding. Thr90 provides a ligand contact to substrate. Residues Gly92, 133 to 135, and 173 to 176 each bind S-adenosyl-L-methionine; these read SPK and QPMD. Pro210 is a substrate binding site.

This sequence belongs to the radical SAM superfamily. 7-carboxy-7-deazaguanine synthase family. In terms of assembly, homodimer. [4Fe-4S] cluster is required as a cofactor. Requires S-adenosyl-L-methionine as cofactor. The cofactor is Mg(2+).

The enzyme catalyses 6-carboxy-5,6,7,8-tetrahydropterin + H(+) = 7-carboxy-7-deazaguanine + NH4(+). Its pathway is purine metabolism; 7-cyano-7-deazaguanine biosynthesis. In terms of biological role, catalyzes the complex heterocyclic radical-mediated conversion of 6-carboxy-5,6,7,8-tetrahydropterin (CPH4) to 7-carboxy-7-deazaguanine (CDG), a step common to the biosynthetic pathways of all 7-deazapurine-containing compounds. In Bordetella pertussis (strain Tohama I / ATCC BAA-589 / NCTC 13251), this protein is 7-carboxy-7-deazaguanine synthase.